We begin with the raw amino-acid sequence, 99 residues long: Acylphosphatase (99 aa).

The region spanning alanine 14–arginine 99 is the Acylphosphatase-like domain. Active-site residues include arginine 29 and asparagine 47.

Belongs to the acylphosphatase family.

The enzyme catalyses an acyl phosphate + H2O = a carboxylate + phosphate + H(+). This Nocardioides sp. (strain ATCC BAA-499 / JS614) protein is Acylphosphatase (acyP).